A 597-amino-acid polypeptide reads, in one-letter code: 2-isopropylmalate synthase (597 aa).

Residues 1–80 (MQLDIDRLVA…QKNESLERTE (80 aa)) form a unknown region. Residues 87–349 (VIIFDTTLRD…ETGIDTTQIV (263 aa)) form the Pyruvate carboxyltransferase domain. The tract at residues 87 to 349 (VIIFDTTLRD…ETGIDTTQIV (263 aa)) is 2-isopropylmalate synthase. The Mn(2+) site is built by D96, H284, H286, and N320. The segment at 475–597 (KFISQKISTE…KPKAQGSGTI (123 aa)) is regulatory domain.

The protein belongs to the alpha-IPM synthase/homocitrate synthase family. LeuA type 1 subfamily. Homodimer. It depends on Mn(2+) as a cofactor.

It localises to the cytoplasm. The catalysed reaction is 3-methyl-2-oxobutanoate + acetyl-CoA + H2O = (2S)-2-isopropylmalate + CoA + H(+). The protein operates within amino-acid biosynthesis; L-leucine biosynthesis; L-leucine from 3-methyl-2-oxobutanoate: step 1/4. Functionally, catalyzes the condensation of the acetyl group of acetyl-CoA with 3-methyl-2-oxobutanoate (2-ketoisovalerate) to form 3-carboxy-3-hydroxy-4-methylpentanoate (2-isopropylmalate). The chain is 2-isopropylmalate synthase from Neisseria gonorrhoeae (strain ATCC 700825 / FA 1090).